Here is a 307-residue protein sequence, read N- to C-terminus: Taste receptor type 2 member 10 (307 aa).

Residues 1-6 (MLRVVE) are Extracellular-facing. A helical transmembrane segment spans residues 7–27 (GIFIFVVVSESVFGVLGNGFI). The Cytoplasmic segment spans residues 28-42 (GLVNCIDCAKNKLST). The helical transmembrane segment at 43-63 (IGFILTGLAISRIFLIWIIIT) threads the bilayer. Over 64-100 (DGFIQIFSPNIYASGNLIEYISYFWVIGNQSSMWFAT) the chain is Extracellular. Asn92 carries N-linked (GlcNAc...) asparagine glycosylation. A helical transmembrane segment spans residues 101-121 (SLSIFYFLKIANFSNYIFLWL). Residues 122–126 (KSRTN) lie on the Cytoplasmic side of the membrane. A helical transmembrane segment spans residues 127–147 (MVLPFMIVFLLISSLLNFAYI). Topologically, residues 148 to 179 (AKILNDYKTKNDTVWDLNMYKSEYFIKQILLN) are extracellular. Asn158 carries an N-linked (GlcNAc...) asparagine glycan. A helical transmembrane segment spans residues 180–200 (LGVIFFFTLSLITCIFLIISL). The Cytoplasmic segment spans residues 201-227 (WRHNRQMQSNVTGLRDSNTEAHVKAMK). Residues 228-248 (VLISFIILFILYFIGMAIEIS) traverse the membrane as a helical segment. Residues 249–257 (CFTVRENKL) are Extracellular-facing. Residues 258 to 278 (LLMFGMTTTAIYPWGHSFILI) traverse the membrane as a helical segment. The Cytoplasmic portion of the chain corresponds to 279-307 (LGNSKLKQASLRVLQQLKCCEKRKNLRVT).

This sequence belongs to the G-protein coupled receptor T2R family. In terms of tissue distribution, expressed in subsets of taste receptor cells of the tongue and palate epithelium and exclusively in gustducin-positive cells.

It localises to the membrane. Gustducin-coupled strychnine receptor implicated in the perception of bitter compounds in the oral cavity and the gastrointestinal tract. Signals through PLCB2 and the calcium-regulated cation channel TRPM5. This chain is Taste receptor type 2 member 10 (TAS2R10), found in Homo sapiens (Human).